The sequence spans 187 residues: Auxin-binding protein T92 (187 aa).

The first 20 residues, 1–20, serve as a signal peptide directing secretion; the sequence is MARHIIILVAVFWFATAEAS. An intrachain disulfide couples cysteine 22 to cysteine 177. 3 residues coordinate Zn(2+): histidine 78, histidine 80, and glutamate 84. Asparagine 117 carries N-linked (GlcNAc...) asparagine glycosylation. Zn(2+) is bound at residue histidine 128. Positions 184–187 match the Prevents secretion from ER motif; sequence KDEL.

In terms of assembly, homodimer.

The protein localises to the endoplasmic reticulum lumen. Its function is as follows. This is probably a receptor for the plant hormone auxin. This chain is Auxin-binding protein T92 (T92), found in Nicotiana tabacum (Common tobacco).